A 136-amino-acid chain; its full sequence is Small ribosomal subunit protein uS9 (136 aa).

The disordered stretch occupies residues 97-136 (SPDNRKPLKTEGHLSRDPRAKERRKYGLKKARKAPQFSKR). Residues 98 to 116 (PDNRKPLKTEGHLSRDPRA) are compositionally biased toward basic and acidic residues. Positions 117-136 (KERRKYGLKKARKAPQFSKR) are enriched in basic residues.

It belongs to the universal ribosomal protein uS9 family.

This Prochlorococcus marinus (strain MIT 9312) protein is Small ribosomal subunit protein uS9.